The following is a 504-amino-acid chain: Sodium-coupled neutral amino acid transporter 3 (504 aa).

Residue Asn74 is glycosylated (N-linked (GlcNAc...) asparagine). The next 5 membrane-spanning stretches (helical) occupy residues Gly83–Leu103, Val106–Ile126, Ala144–Ile164, Met187–Met207, and Leu213–Tyr233. Cys240 and Cys275 are disulfide-bonded. N-linked (GlcNAc...) asparagine glycans are attached at residues Asn247, Asn248, Asn252, and Asn323. The next 5 helical transmembrane spans lie at Leu324–Phe344, Ile366–Phe386, Val408–Ile428, Ile431–Phe451, and Ala471–Ile491.

The protein belongs to the amino acid/polyamine transporter 2 family.

Its subcellular location is the cell membrane. It localises to the basolateral cell membrane. It catalyses the reaction L-glutamine(out) + Na(+)(out) + H(+)(in) = L-glutamine(in) + Na(+)(in) + H(+)(out). It carries out the reaction L-asparagine(out) + Na(+)(out) + H(+)(in) = L-asparagine(in) + Na(+)(in) + H(+)(out). The enzyme catalyses L-histidine(out) + Na(+)(out) + H(+)(in) = L-histidine(in) + Na(+)(in) + H(+)(out). Its function is as follows. Symporter that cotransports specific neutral amino acids and sodium ions, coupled to an H(+) antiporter activity. Mainly participates in the glutamate-GABA-glutamine cycle in brain where it transports L-glutamine from astrocytes in the intercellular space for the replenishment of both neurotransmitters glutamate and gamma-aminobutyric acid (GABA) in neurons and also functions as the major influx transporter in ganglion cells mediating the uptake of glutamine. The transport activity is specific for L-glutamine, L-histidine and L-asparagine. The transport is electroneutral coupled to the cotransport of 1 Na(+) and the antiport of 1 H(+). The transport is pH dependent, saturable, Li(+) tolerant and functions in both direction depending on the concentration gradients of its substrates and cotransported ions. Also mediates an amino acid-gated H(+) conductance that is not stoichiometrically coupled to the amino acid transport but which influences the ionic gradients that drive the amino acid transport. In addition, may play a role in nitrogen metabolism, amino acid homeostasis, glucose metabolism and renal ammoniagenesis. The polypeptide is Sodium-coupled neutral amino acid transporter 3 (Homo sapiens (Human)).